Consider the following 196-residue polypeptide: Pentatricopeptide repeat-containing protein At1g62350 (196 aa).

PPR repeat units lie at residues 70–104 and 105–139; these read DMFF…EVLF and DQHT…PDRP.

Belongs to the PPR family. P subfamily.

In Arabidopsis thaliana (Mouse-ear cress), this protein is Pentatricopeptide repeat-containing protein At1g62350.